Consider the following 245-residue polypeptide: Small ribosomal subunit protein uS2 (245 aa).

It belongs to the universal ribosomal protein uS2 family.

The polypeptide is Small ribosomal subunit protein uS2 (Pseudomonas fluorescens (strain ATCC BAA-477 / NRRL B-23932 / Pf-5)).